We begin with the raw amino-acid sequence, 631 residues long: ATP-dependent zinc metalloprotease FtsH (631 aa).

The Stromal segment spans residues 1 to 2 (MK). The helical transmembrane segment at 3 to 23 (ISWKNILLTLIPLGLISFLVW) threads the bilayer. At 24–118 (QGFNNTTNPQ…AHATNDSTPA (95 aa)) the chain is on the lumenal side. The chain crosses the membrane as a helical span at residues 119 to 139 (WSLIGNLIFPILLIAGLAFLF). Over 140–631 (RRSSNLPGGP…IDYKSQLKST (492 aa)) the chain is Stromal. 213-220 (GPPGTGKT) contributes to the ATP binding site. Histidine 434 contributes to the Zn(2+) binding site. Glutamate 435 is a catalytic residue. Histidine 438 and aspartate 512 together coordinate Zn(2+).

In the central section; belongs to the AAA ATPase family. It in the C-terminal section; belongs to the peptidase M41 family. In terms of assembly, homohexamer. Zn(2+) serves as cofactor.

Its subcellular location is the plastid. The protein resides in the chloroplast thylakoid membrane. In terms of biological role, acts as a processive, ATP-dependent zinc metallopeptidase. The polypeptide is ATP-dependent zinc metalloprotease FtsH (Guillardia theta (Cryptophyte)).